The following is an 81-amino-acid chain: uncharacterized protein (81 aa).

This is an uncharacterized protein from Escherichia coli (strain K12).